We begin with the raw amino-acid sequence, 270 residues long: Phosphatidate cytidylyltransferase (270 aa).

7 consecutive transmembrane segments (helical) span residues 19–39, 53–73, 76–96, 101–121, 126–146, 183–203, and 248–268; these read LWLT…IGLA, TAFS…LLIL, GALL…VTQW, GWPA…SLLR, FGFT…IAAY, LVAS…ALLL, and ALLY…AIFF.

The protein belongs to the CDS family.

The protein localises to the cell inner membrane. It catalyses the reaction a 1,2-diacyl-sn-glycero-3-phosphate + CTP + H(+) = a CDP-1,2-diacyl-sn-glycerol + diphosphate. It functions in the pathway phospholipid metabolism; CDP-diacylglycerol biosynthesis; CDP-diacylglycerol from sn-glycerol 3-phosphate: step 3/3. The sequence is that of Phosphatidate cytidylyltransferase (cdsA) from Brucella melitensis biotype 1 (strain ATCC 23456 / CCUG 17765 / NCTC 10094 / 16M).